We begin with the raw amino-acid sequence, 1043 residues long: Sarcoplasmic/endoplasmic reticulum calcium ATPase 2 (1043 aa).

Topologically, residues 1–48 are cytoplasmic; the sequence is MENAHTKTVEEVLGHFGVNESTGLSLEQVKKLKERWGSNELPAEEGKT. Residue serine 38 is modified to Phosphoserine. A helical membrane pass occupies residues 49–69; sequence LLELVIEQFEDLLVRILLLAA. Residues 70–89 are Lumenal-facing; sequence CISFVLAWFEEGEETITAFV. The helical transmembrane segment at 90-110 threads the bilayer; it reads EPFVILLILVANAIVGVWQER. Residues 111 to 253 are Cytoplasmic-facing; sequence NAENAIEALK…QERTPLQQKL (143 aa). The chain crosses the membrane as a helical span at residues 254-273; it reads DEFGEQLSKVISLICIAVWI. The Lumenal portion of the chain corresponds to 274–295; sequence INIGHFNDPVHGGSWIRGAIYY. Tyrosine 294 and tyrosine 295 each carry 3'-nitrotyrosine. A helical membrane pass occupies residues 296-313; the sequence is FKIAVALAVAAIPEGLPA. Valine 304, alanine 305, isoleucine 307, and glutamate 309 together coordinate Ca(2+). Residues 314 to 756 are Cytoplasmic-facing; that stretch reads VITTCLALGT…EEGRAIYNNM (443 aa). The 4-aspartylphosphate intermediate role is filled by aspartate 351. Residues aspartate 351 and threonine 353 each coordinate Mg(2+). Residue threonine 353 coordinates ATP. A Phosphothreonine modification is found at threonine 441. ATP contacts are provided by glutamate 442, arginine 489, and lysine 514. The residue at position 531 (serine 531) is a Phosphoserine. Arginine 559 lines the ATP pocket. Residues 575-594 are interaction with HAX1; that stretch reads MHLEDSANFIKYETNLTFVG. Serine 580 is subject to Phosphoserine. Threonine 624, glycine 625, and aspartate 626 together coordinate ATP. Phosphoserine is present on residues serine 661 and serine 663. 2 residues coordinate ATP: arginine 677 and lysine 683. Residue aspartate 702 participates in Mg(2+) binding. Asparagine 705 serves as a coordination point for ATP. A helical transmembrane segment spans residues 757-776; the sequence is KQFIRYLISSNVGEVVCIFL. Residues asparagine 767 and glutamate 770 each contribute to the Ca(2+) site. Over 777-786 the chain is Lumenal; that stretch reads TAALGFPEAL. A helical membrane pass occupies residues 787 to 807; sequence IPVQLLWVNLVTDGLPATALG. The interaction with PLN stretch occupies residues 787-807; the sequence is IPVQLLWVNLVTDGLPATALG. The tract at residues 788–1043 is interaction with TMEM64 and PDIA3; sequence PVQLLWVNLV…DTNFSDMFWS (256 aa). Positions 795, 798, and 799 each coordinate Ca(2+). The Cytoplasmic portion of the chain corresponds to 808 to 827; sequence FNPPDLDIMNKPPRNPKEPL. The chain crosses the membrane as a helical span at residues 828–850; that stretch reads ISGWLFFRYLAIGCYVGAATVGA. Residues 851 to 896 are Lumenal-facing; it reads AAWWFIAADGGPRVSFYQLSHFLQCKEDNPDFEGVDCAIFESPYPM. Cysteine 875 and cysteine 887 are disulfide-bonded. The chain crosses the membrane as a helical span at residues 897 to 916; that stretch reads TMALSVLVTIEMCNALNSLS. Glutamate 907 lines the Ca(2+) pocket. Topologically, residues 917–929 are cytoplasmic; that stretch reads ENQSLLRMPPWEN. Residues 930–948 form a helical membrane-spanning segment; that stretch reads IWLVGSICLSMSLHFLILY. The segment at 931–942 is interaction with PLN; the sequence is WLVGSICLSMSL. The Lumenal portion of the chain corresponds to 949 to 963; the sequence is VEPLPLIFQITPLNL. A helical membrane pass occupies residues 964-984; the sequence is TQWLMVLKISLPVILMDETLK. Topologically, residues 985-1043 are cytoplasmic; it reads FVARNYLEPGKECAQPATKPSCSLSACTDGISWPFVLLIMPLVVWVYSTDTNFSDMFWS.

The protein belongs to the cation transport ATPase (P-type) (TC 3.A.3) family. Type IIA subfamily. As to quaternary structure, interacts with sarcolipin (SLN); the interaction inhibits ATP2A2 Ca(2+) affinity. Interacts with phospholamban (PLN); the interaction inhibits ATP2A2 Ca(2+) affinity. Interacts with myoregulin (MRLN). Interacts with ARLN and ERLN; the interactions inhibit ATP2A2 Ca(2+) affinity. Interacts with STRIT1/DWORF; the interaction results in activation of ATP2A2. Interacts with the monomeric forms of SLN, PLN, ARLN, ERLN and STRI1/DWORF. Interacts with HAX1. Interacts with S100A8 and S100A9. Interacts with SLC35G1 and STIM1. Interacts with TMEM203. Interacts with TMEM64 and PDIA3. Interacts with TMX1. Interacts with TMX2. Interacts with VMP1; VMP1 competes with PLN and SLN to prevent them from forming an inhibitory complex with ATP2A2. Interacts with ULK1. Interacts with S100A1 in a Ca(2+)-dependent manner. Interacts with TUNAR. Interacts with FLVCR2; this interaction occurs in the absence of heme and promotes ATP2A2 proteasomal degradation; this complex is dissociated upon heme binding. Interacts with FNIP1. In terms of assembly, interacts with TRAM2 (via C-terminus). The cofactor is Mg(2+). Post-translationally, nitrated under oxidative stress. Nitration on the two tyrosine residues inhibits catalytic activity. In terms of processing, serotonylated on Gln residues by TGM2 in response to hypoxia, leading to its inactivation. As to expression, isoform 2 is highly expressed in heart and slow twitch skeletal muscle. Isoform 1 is widely expressed.

It localises to the endoplasmic reticulum membrane. It is found in the sarcoplasmic reticulum membrane. The catalysed reaction is Ca(2+)(in) + ATP + H2O = Ca(2+)(out) + ADP + phosphate + H(+). Has different conformational states with differential Ca2+ affinity. The E1 conformational state (active form) shows high Ca(2+) affinity, while the E2 state exhibits low Ca(2+) affinity. Binding of ATP allosterically increases its affinity for subsequent binding of Ca2+. Reversibly inhibited by phospholamban (PLN) at low calcium concentrations. PLN inhibits ATP2A2 Ca(2+) affinity by disrupting its allosteric activation by ATP. Inhibited by sarcolipin (SLN) and myoregulin (MRLN). The inhibition is blocked by VMP1. Enhanced by STRIT1/DWORF; STRIT1 increases activity by displacing sarcolipin (SLN), phospholamban (PLN) and myoregulin (MRLN). Stabilizes SERCA2 in its E2 state. Its function is as follows. This magnesium-dependent enzyme catalyzes the hydrolysis of ATP coupled with the translocation of calcium from the cytosol to the sarcoplasmic reticulum lumen. Involved in autophagy in response to starvation. Upon interaction with VMP1 and activation, controls ER-isolation membrane contacts for autophagosome formation. Also modulates ER contacts with lipid droplets, mitochondria and endosomes. In coordination with FLVCR2 mediates heme-stimulated switching from mitochondrial ATP synthesis to thermogenesis. Functionally, involved in the regulation of the contraction/relaxation cycle. Acts as a regulator of TNFSF11-mediated Ca(2+) signaling pathways via its interaction with TMEM64 which is critical for the TNFSF11-induced CREB1 activation and mitochondrial ROS generation necessary for proper osteoclast generation. Association between TMEM64 and SERCA2 in the ER leads to cytosolic Ca(2+) spiking for activation of NFATC1 and production of mitochondrial ROS, thereby triggering Ca(2+) signaling cascades that promote osteoclast differentiation and activation. In Rattus norvegicus (Rat), this protein is Sarcoplasmic/endoplasmic reticulum calcium ATPase 2 (Atp2a2).